The primary structure comprises 901 residues: Sperm-associated antigen 1 (901 aa).

TPR repeat units lie at residues 213–246, 247–279, and 280–313; these read ANRE…LPTA, IAYN…DPGN, and VKAL…EPDN. Positions 322 to 437 are disordered; the sequence is EVERDLKNSE…DNPSGLKRRG (116 aa). Phosphoserine is present on residues S351 and S359. TPR repeat units follow at residues 430–464, 472–505, 507–539, 606–639, and 640–673; these read PSGL…EPTG, SILY…HPFS, KPLL…DCGI, FQAL…NSKA, and CAIY…DGEN. The tract at residues 694–776 is disordered; the sequence is GVDPSQVLLS…AEPAEKLDVS (83 aa). S703 is subject to Phosphoserine. Positions 708 to 717 are enriched in basic and acidic residues; that stretch reads EAARHLDTKN. S739 and S740 each carry phosphoserine. 756–763 provides a ligand contact to GTP; it reads PARDGVED. S766 bears the Phosphoserine mark.

Detected in cerebellum, tongue, esophagus, forestomach, sperm and testis.

Its subcellular location is the cytoplasm. It is found in the dynein axonemal particle. Functionally, may play a role in the cytoplasmic assembly of the ciliary dynein arms. May play a role in fertilization. Binds GTP and has GTPase activity. This is Sperm-associated antigen 1 (Spag1) from Mus musculus (Mouse).